The chain runs to 161 residues: PHD finger-containing protein 4 (161 aa).

The segment at 30–80 (KKPCEVCGSNANDHAIMTCFLCRDTREHIYCARVHLRSVPRMWICEECRMN) adopts a PHD-type zinc-finger fold. The Zn(2+) site is built by Cys-33, Cys-36, Cys-48, Cys-51, His-57, Cys-60, Cys-74, and Cys-77. The segment covering 114–132 (TMTSSDSGNQISATHQQPP) has biased composition (polar residues). The interval 114–161 (TMTSSDSGNQISATHQQPPQAHASPVAVPMDTSSSDNQQPPSDSESAI) is disordered. A compositionally biased stretch (low complexity) spans 146–161 (SSSDNQQPPSDSESAI).

As to quaternary structure, interacts directly with AIPP3/BDT1.

Together with AIPP3/BDT1, cooperates to form a BAH-PHD bivalent histone reader complex able to read histone H3 lysine 27 trimethylation (H3K27me3) histone marks in order to regulate transcription, especially to prevent early flowering; promotes AIPP3/BDT1 binding to H3K27me3. The chain is PHD finger-containing protein 4 from Arabidopsis thaliana (Mouse-ear cress).